A 274-amino-acid polypeptide reads, in one-letter code: MHGTVLPPLKKGWQATLDLRFHQAGGKTVLASAQHVGPLTVQRPFYPEEETCHLYLLHPPGGIVGGDELTISAHLAPGCHTLITMPGASKFYRSSGAQALVRQQLTLAPQATLEWLPQDAIFFPGANARLFTTFHLCASSRLLAWDLLCLGRPVIGETFSHGTLSNRLEVWVDDEPLLVERLQLQEGELSSVAERPWVGTLLCYPATDALLDGVRDALAPLGLYAGASLTDRLLTVRFLSDDNLICQRVMRDVWQFLRPHLTGKSPVLPRIWLT.

This sequence belongs to the UreD family. In terms of assembly, ureD, UreF and UreG form a complex that acts as a GTP-hydrolysis-dependent molecular chaperone, activating the urease apoprotein by helping to assemble the nickel containing metallocenter of UreC. The UreE protein probably delivers the nickel.

The protein localises to the cytoplasm. In terms of biological role, required for maturation of urease via the functional incorporation of the urease nickel metallocenter. In Klebsiella pneumoniae subsp. pneumoniae (strain ATCC 700721 / MGH 78578), this protein is Urease accessory protein UreD.